The following is a 597-amino-acid chain: Elongation factor 4 (597 aa).

The tr-type G domain maps to 2 to 184 (KHIRNFSIIA…NIVTAIPPPE (183 aa)). Residues 14–19 (DHGKST) and 131–134 (NKID) each bind GTP.

Belongs to the TRAFAC class translation factor GTPase superfamily. Classic translation factor GTPase family. LepA subfamily.

Its subcellular location is the cell inner membrane. The catalysed reaction is GTP + H2O = GDP + phosphate + H(+). In terms of biological role, required for accurate and efficient protein synthesis under certain stress conditions. May act as a fidelity factor of the translation reaction, by catalyzing a one-codon backward translocation of tRNAs on improperly translocated ribosomes. Back-translocation proceeds from a post-translocation (POST) complex to a pre-translocation (PRE) complex, thus giving elongation factor G a second chance to translocate the tRNAs correctly. Binds to ribosomes in a GTP-dependent manner. The protein is Elongation factor 4 of Vibrio atlanticus (strain LGP32) (Vibrio splendidus (strain Mel32)).